We begin with the raw amino-acid sequence, 101 residues long: Small ribosomal subunit protein uS14A (101 aa).

It belongs to the universal ribosomal protein uS14 family. As to quaternary structure, part of the 30S ribosomal subunit. Contacts proteins S3 and S10.

In terms of biological role, binds 16S rRNA, required for the assembly of 30S particles and may also be responsible for determining the conformation of the 16S rRNA at the A site. This is Small ribosomal subunit protein uS14A from Salinispora tropica (strain ATCC BAA-916 / DSM 44818 / JCM 13857 / NBRC 105044 / CNB-440).